The following is a 673-amino-acid chain: DNA ligase (673 aa).

Residues 35–39 (DAEYD), 84–85 (SL), and Glu-115 contribute to the NAD(+) site. Lys-117 acts as the N6-AMP-lysine intermediate in catalysis. NAD(+) is bound by residues Arg-138, Glu-175, Lys-292, and Lys-316. Zn(2+)-binding residues include Cys-410, Cys-413, Cys-428, and Cys-434. In terms of domain architecture, BRCT spans 592–673 (PRKLPLQGLV…FLDLLERGRP (82 aa)).

Belongs to the NAD-dependent DNA ligase family. LigA subfamily. Mg(2+) is required as a cofactor. Mn(2+) serves as cofactor.

The catalysed reaction is NAD(+) + (deoxyribonucleotide)n-3'-hydroxyl + 5'-phospho-(deoxyribonucleotide)m = (deoxyribonucleotide)n+m + AMP + beta-nicotinamide D-nucleotide.. Its function is as follows. DNA ligase that catalyzes the formation of phosphodiester linkages between 5'-phosphoryl and 3'-hydroxyl groups in double-stranded DNA using NAD as a coenzyme and as the energy source for the reaction. It is essential for DNA replication and repair of damaged DNA. The protein is DNA ligase of Methylococcus capsulatus (strain ATCC 33009 / NCIMB 11132 / Bath).